Consider the following 551-residue polypeptide: Tetrachloroethene reductive dehalogenase (551 aa).

Positions 1–39 form a signal peptide, tat-type signal; the sequence is MGEINRRNFLKVSILGAAAAAVASASAVKGMVSPLVADA. Residues 411-440 enclose the 4Fe-4S ferredoxin-type 1 domain; that stretch reads PRKFGVREFCRLCKKCADACPAQAISHEKD. Residues Cys-420, Cys-423, Cys-426, Cys-430, Cys-467, Cys-478, Cys-481, and Cys-485 each coordinate [4Fe-4S] cluster. A 4Fe-4S ferredoxin-type 2 domain is found at 478-496; it reads CSNCVAVCSWNKVETWNHD.

Belongs to the PceA family. [4Fe-4S] cluster serves as cofactor. The cofactor is corrinoid. Post-translationally, predicted to be exported by the Tat system. The position of the signal peptide cleavage has been experimentally proven.

Its subcellular location is the cytoplasm. It localises to the cell membrane. The protein localises to the secreted. The enzyme catalyses trichloroethene + chloride + A + H(+) = tetrachloroethene + AH2. It catalyses the reaction trichloroethene + AH2 = (Z)-1,2-dichloroethene + chloride + A + H(+). With respect to regulation, pceT is required as a chaperone for prePceA maturation. In the absence or presence of exogenous vitamin B12, the intracellular corrinoid level decreases in fumarate-grown cells and the PceA precursor forms catalytically inactive, corrinoid-free multiprotein aggregates. Exogenous vitamin B12 is not incorporated into the PceA precursor, even though it affects the transposition of the pce gene cluster. Functionally, catalyzes the reductive dechlorination of tetrachloroethene (PCE) to trichloroethene (TCE) and of trichloroethene to cis-1,2-dichloroethene (DCE). Can also use various chlorinated ethanes such as tetrachloroethane, pentachloroethane and hexachloroethane. Reduced methyl viologen can act as the artificial electron donor. The sequence is that of Tetrachloroethene reductive dehalogenase from Desulfitobacterium hafniense (strain Y51).